A 247-amino-acid chain; its full sequence is Cell division protein ZapD (247 aa).

This sequence belongs to the ZapD family. In terms of assembly, interacts with FtsZ.

It is found in the cytoplasm. Functionally, cell division factor that enhances FtsZ-ring assembly. Directly interacts with FtsZ and promotes bundling of FtsZ protofilaments, with a reduction in FtsZ GTPase activity. The chain is Cell division protein ZapD from Escherichia coli O7:K1 (strain IAI39 / ExPEC).